The following is a 625-amino-acid chain: ATP-dependent RNA helicase mrh4, mitochondrial (625 aa).

The transit peptide at 1–16 (MWKTARDSVCLICRSA) directs the protein to the mitochondrion. Low complexity predominate over residues 19–28 (TTTSTSARAS). The segment at 19-119 (TTTSTSARAS…DKNTKGQKAL (101 aa)) is disordered. Basic and acidic residues predominate over residues 90–113 (DPRKAPKPKPVEEDSRRDKRDKNT). A Q motif motif is present at residues 144–177 (QAFDQFDLLPVVKEAIAQEALKGMTEIKPTPVQR). In terms of domain architecture, Helicase ATP-binding spans 195-406 (PKSDNGREEF…EEQFPYINRI (212 aa)). 208 to 215 (AETGSGKT) provides a ligand contact to ATP. Positions 353 to 356 (DEAD) match the DEAD box motif. In terms of domain architecture, Helicase C-terminal spans 453–625 (EGPKSEIDVK…ESMFMGQALV (173 aa)).

The protein belongs to the DEAD box helicase family. MRH4 subfamily.

It is found in the mitochondrion. It catalyses the reaction ATP + H2O = ADP + phosphate + H(+). Its function is as follows. ATP-binding RNA helicase involved in mitochondrial RNA metabolism. Required for maintenance of mitochondrial DNA. The sequence is that of ATP-dependent RNA helicase mrh4, mitochondrial (drh-15) from Neurospora crassa (strain ATCC 24698 / 74-OR23-1A / CBS 708.71 / DSM 1257 / FGSC 987).